A 496-amino-acid polypeptide reads, in one-letter code: E1B 55 kDa protein (496 aa).

Residues 1-74 (MERRNPSERG…EPESRPGPSG (74 aa)) are disordered. Low complexity predominate over residues 45–61 (GGAAAAAGGSQAAAAGA). Phosphoserine is present on residues Ser-490 and Ser-491. Residue Thr-495 is modified to Phosphothreonine.

This sequence belongs to the adenoviridae E1B 55 kDa protein family. In terms of assembly, interacts with host PML-4 and PML-5; this interaction promotes efficient subnuclear targeting of E1B-55K to PML nuclear bodies. Interacts with E4-ORF3 protein. Interacts with E4-ORF6 protein. Post-translationally, phosphorylation at the C-terminus affects the subcellular location.

The protein resides in the host nucleus. The protein localises to the host cytoplasm. Functionally, plays a major role to prevent cellular inhibition of viral genome replication. Assembles an SCF-like E3 ubiquitin ligase complex based on the cellular proteins ELOB, ELOC, CUL5 and RBX1, in cooperation with viral E4orf6. This viral RING-type ligase ubiquitinates cellular substrates and targets them to proteasomal degradation: TP53/p53, LIG4, MRE11-RAD50-NBS1 (MRN) complex, ITGA3, DAXX and BLM. E1B-55K probably acts as the substrate-specific adapter of the SCF-like E3 ubiquitin ligase complex. Degradation of host TP53/p53 activity is essential for preventing E1A-induced TP53 accumulation that would otherwise lead to cell apoptosis and growth arrest. E1B-55K also inactivates TP53 transcription-factor activity by binding its transactivation domain. E1B-55K also functions as a SUMO1 E3 ligase for TP53 which causes the latter to be sequestered in promyelocytic leukemia (PML) nuclear bodies thereby contributing to maximal inhibition of TP53 function. The protein is E1B 55 kDa protein of Homo sapiens (Human).